A 403-amino-acid polypeptide reads, in one-letter code: MEDRSHKVLLALVMLFLFAVIVLQYVCPGTECQLLRLRALSPAAAADPYRAEDETPARFVPRFNFSAGDLLRRVDFNIKGDDLIVFLHIQKTGGTTFGRHLVRNIQLEQPCECRAGQKKCTCHRPGKRETWLFSRFSTGWSCGLHADWTELTNCVPSVVDSKKEVRLRPSRNFYYITILRDPVSRYLSEWRHVQRGATWKASLHVCDGRSPTTEELPSCYTGDDWSGCSLQEFMDCPYNLANNRQVRMLSDLSLVGCYNLSVMPEEQRNKVLLDSAKENLKRMAFFGLTEFQRKTQYLFEKTFNMNFISPFTQYNSTRASSVEIDEQTQQRIEALNFLDMELYDYAKDLFLQRYQYMRQKEHQEARRKRQEQRKILRAKQAHLREQGENSSSTDYLGNVERWR.

Over 1 to 7 (MEDRSHK) the chain is Cytoplasmic. A helical; Signal-anchor for type II membrane protein membrane pass occupies residues 8-28 (VLLALVMLFLFAVIVLQYVCP). At 29-403 (GTECQLLRLR…DYLGNVERWR (375 aa)) the chain is on the lumenal side. N64 carries an N-linked (GlcNAc...) asparagine glycan. 88-96 (HIQKTGGTT) provides a ligand contact to 3'-phosphoadenylyl sulfate. Substrate contacts are provided by residues 118 to 119 (KK), R135, W140, and H145. Residue H145 is the Proton acceptor of the active site. 3'-phosphoadenylyl sulfate is bound by residues R180 and S188. Substrate-binding residues include H192 and W199. N259 carries an N-linked (GlcNAc...) asparagine glycan. Residue 312–314 (TQY) participates in 3'-phosphoadenylyl sulfate binding. A glycan (N-linked (GlcNAc...) asparagine) is linked at N315. 318–319 (RA) is a binding site for 3'-phosphoadenylyl sulfate. The segment at 381–403 (AHLREQGENSSSTDYLGNVERWR) is disordered. N389 is a glycosylation site (N-linked (GlcNAc...) asparagine).

The protein belongs to the sulfotransferase 6 family.

It is found in the membrane. It carries out the reaction alpha-D-glucosaminyl-[heparan sulfate](n) + 3'-phosphoadenylyl sulfate = 6-sulfo-alpha-D-glucosaminyl-[heparan sulfate](n) + adenosine 3',5'-bisphosphate + H(+). In terms of biological role, 6-O-sulfation enzyme which catalyzes the transfer of sulfate from 3'-phosphoadenosine 5'-phosphosulfate (PAPS) to position 6 of the N-sulfoglucosamine residue (GlcNS) of heparan sulfate. May also play a role in limb development. The chain is Heparan-sulfate 6-O-sulfotransferase 2 (HS6ST2) from Gallus gallus (Chicken).